The sequence spans 479 residues: Glutathione gamma-glutamylcysteinyltransferase 3 (479 aa).

In terms of domain architecture, Peptidase C83 spans 1–221 (MASAGLYRRV…GYMIISKLKR (221 aa)). Residues cysteine 56, histidine 162, and aspartate 180 contribute to the active site.

The protein belongs to the phytochelatin synthase family. Expressed in roots, nodules and leaves.

The enzyme catalyses [Glu(-Cys)](n)-Gly + glutathione + H(+) = [Glu(-Cys)](n+1)-Gly + glycine. Requires cadmium for activity. In terms of biological role, involved in the synthesis of phytochelatins (PC) and homophytochelatins (hPC), the heavy-metal-binding peptides of plants. In Lotus japonicus (Lotus corniculatus var. japonicus), this protein is Glutathione gamma-glutamylcysteinyltransferase 3 (PCS3).